We begin with the raw amino-acid sequence, 356 residues long: tRNA N6-adenosine threonylcarbamoyltransferase (356 aa).

Fe cation is bound by residues histidine 116 and histidine 120. Residues 139 to 143 (IVSGG), aspartate 174, glycine 187, aspartate 191, and asparagine 281 contribute to the substrate site. Aspartate 309 contributes to the Fe cation binding site.

Belongs to the KAE1 / TsaD family. The cofactor is Fe(2+).

It is found in the cytoplasm. The enzyme catalyses L-threonylcarbamoyladenylate + adenosine(37) in tRNA = N(6)-L-threonylcarbamoyladenosine(37) in tRNA + AMP + H(+). Its function is as follows. Required for the formation of a threonylcarbamoyl group on adenosine at position 37 (t(6)A37) in tRNAs that read codons beginning with adenine. Is involved in the transfer of the threonylcarbamoyl moiety of threonylcarbamoyl-AMP (TC-AMP) to the N6 group of A37, together with TsaE and TsaB. TsaD likely plays a direct catalytic role in this reaction. In Frankia casuarinae (strain DSM 45818 / CECT 9043 / HFP020203 / CcI3), this protein is tRNA N6-adenosine threonylcarbamoyltransferase.